Reading from the N-terminus, the 69-residue chain is Ubiquitin-ribosomal protein eL40 fusion protein (69 aa).

Residues 1–17 (NIQKESTLHLVLRLRGG) form the Ubiquitin-like domain. Residue Lys-4 forms a Glycyl lysine isopeptide (Lys-Gly) (interchain with G-Cter in ubiquitin) linkage. A Glycyl lysine isopeptide (Gly-Lys) (interchain with K-? in acceptor proteins) cross-link involves residue Gly-17. Lys-39 is modified (N6,N6,N6-trimethyllysine).

The protein in the N-terminal section; belongs to the ubiquitin family. In the C-terminal section; belongs to the eukaryotic ribosomal protein eL40 family. In terms of assembly, part of the 60S ribosomal subunit. In terms of processing, trimethylation of Lys-39 ('Lys-22' of the mature chain) by SMYD5 promotes translation elongation and protein synthesis.

Its subcellular location is the cytoplasm. It localises to the nucleus. Exists either covalently attached to another protein, or free (unanchored). When covalently bound, it is conjugated to target proteins via an isopeptide bond either as a monomer (monoubiquitin), a polymer linked via different Lys residues of the ubiquitin (polyubiquitin chains) or a linear polymer linked via the initiator Met of the ubiquitin (linear polyubiquitin chains). Polyubiquitin chains, when attached to a target protein, have different functions depending on the Lys residue of the ubiquitin that is linked: Lys-6-linked may be involved in DNA repair; Lys-11-linked is involved in ERAD (endoplasmic reticulum-associated degradation) and in cell-cycle regulation; Lys-29-linked is involved in proteotoxic stress response and cell cycle; Lys-33-linked is involved in kinase modification; Lys-48-linked is involved in protein degradation via the proteasome; Lys-63-linked is involved in endocytosis, DNA-damage responses as well as in signaling processes leading to activation of the transcription factor NF-kappa-B. Linear polymer chains formed via attachment by the initiator Met lead to cell signaling. Ubiquitin is usually conjugated to Lys residues of target proteins, however, in rare cases, conjugation to Cys or Ser residues has been observed. When polyubiquitin is free (unanchored-polyubiquitin), it also has distinct roles, such as in activation of protein kinases, and in signaling. Functionally, component of the 60S subunit of the ribosome. This Gallus gallus (Chicken) protein is Ubiquitin-ribosomal protein eL40 fusion protein (UBA52).